A 149-amino-acid chain; its full sequence is Oligosaccharyltransferase complex subunit OSTC (149 aa).

The Cytoplasmic portion of the chain corresponds to 1-32; the sequence is METLYRVPFLVLECPNLKLKKPPWLHMPSAMT. The helical transmembrane segment at 33–53 threads the bilayer; it reads VYALVVVSYFLITGGIIYDVI. Residues 54–83 are Extracellular-facing; it reads VEPPSVGSMTDEHGHQRPVAFLAYRVNGQY. A helical transmembrane segment spans residues 84-104; sequence IMEGLASSFLFTMGGLGFIIL. Over 105–117 the chain is Cytoplasmic; the sequence is DRSNAPNIPKLNR. Residues 118-138 traverse the membrane as a helical segment; sequence FLLLFIGFVCVLLSFFMARVF. Residues 139–149 are Extracellular-facing; the sequence is MRMKLPGYLMG.

Belongs to the OSTC family. In terms of assembly, component of STT3A-containing oligosaccharyl transferase (OST-A) complex. STT3A-containing complex assembly occurs through the formation of 3 subcomplexes. Subcomplex 1 contains RPN1 and TMEM258, subcomplex 2 contains the STT3A-specific subunits STT3A, DC2/OSTC, and KCP2 as well as the core subunit OST4, and subcomplex 3 contains RPN2, DAD1, and OST48. The OST-A complex can form stable complexes with the Sec61 complex or with both the Sec61 and TRAP complexes. Interacts with PSEN1 and NCSTN; indicative for an association with the gamma-secretase complex.

The protein localises to the endoplasmic reticulum. It localises to the membrane. Its pathway is protein modification; protein glycosylation. Subunit of STT3A-containing oligosaccharyl transferase (OST-A) complex that catalyzes the initial transfer of a defined glycan (Glc(3)Man(9)GlcNAc(2) in eukaryotes) from the lipid carrier dolichol-pyrophosphate to an asparagine residue within an Asn-X-Ser/Thr consensus motif in nascent polypeptide chains, the first step in protein N-glycosylation. N-glycosylation occurs cotranslationally and the complex associates with the Sec61 complex at the channel-forming translocon complex that mediates protein translocation across the endoplasmic reticulum (ER). Within the OST-A complex, acts as an adapter that anchors the OST-A complex to the Sec61 complex. May be involved in N-glycosylation of APP (amyloid-beta precursor protein). Can modulate gamma-secretase cleavage of APP by enhancing endoprotelysis of PSEN1. The protein is Oligosaccharyltransferase complex subunit OSTC of Homo sapiens (Human).